Reading from the N-terminus, the 291-residue chain is MTETLPPVTESAVALQAEVTQRELFEFVLNDPLLASSLYINIALAGLSILLFVFMTRGLDDPRAKLIAVSTILVPVVSIASYTGLASGLTISVLEMPAGHFAEGSSVMLGGEEVDGVVTMWGRYLTWALSTPMILLALGLLAGSNATKLFTAITFDIAMCVTGLAAALTTSSHLMRWFWYAISCACFLVVLYILLVEWAQDAKAAGTADMFNTLKLLTVVMWLGYPIVWALGVEGIAVLPVGVTSWGYSFLDIVAKYIFAFLLLNYLTSNESVVSGSILDVPSASGTPADD.

The Extracellular segment spans residues 1 to 30 (MTETLPPVTESAVALQAEVTQRELFEFVLN). The helical transmembrane segment at 31–56 (DPLLASSLYINIALAGLSILLFVFMT) threads the bilayer. The Cytoplasmic portion of the chain corresponds to 57 to 62 (RGLDDP). A helical transmembrane segment spans residues 63-86 (RAKLIAVSTILVPVVSIASYTGLA). Topologically, residues 87 to 120 (SGLTISVLEMPAGHFAEGSSVMLGGEEVDGVVTM) are extracellular. The helical transmembrane segment at 121-142 (WGRYLTWALSTPMILLALGLLA) threads the bilayer. The Cytoplasmic segment spans residues 143-145 (GSN). A helical transmembrane segment spans residues 146 to 169 (ATKLFTAITFDIAMCVTGLAAALT). Over 170-172 (TSS) the chain is Extracellular. The helical transmembrane segment at 173–195 (HLMRWFWYAISCACFLVVLYILL) threads the bilayer. At 196-207 (VEWAQDAKAAGT) the chain is on the cytoplasmic side. A helical transmembrane segment spans residues 208 to 231 (ADMFNTLKLLTVVMWLGYPIVWAL). Residues 232 to 240 (GVEGIAVLP) lie on the Extracellular side of the membrane. Residues 241–269 (VGVTSWGYSFLDIVAKYIFAFLLLNYLTS) traverse the membrane as a helical segment. The residue at position 256 (Lys-256) is an N6-(retinylidene)lysine. At 270-291 (NESVVSGSILDVPSASGTPADD) the chain is on the cytoplasmic side.

The protein belongs to the archaeal/bacterial/fungal opsin family.

It is found in the cell membrane. Functionally, light-driven anion pump. Binding affinity for the anions is in the order, bromide &gt; chloride &gt; nitrate &gt; azide &gt; bromate and binding is pH dependent. The chain is Halorhodopsin (hop) from Natronomonas pharaonis (Natronobacterium pharaonis).